The sequence spans 189 residues: Elongation factor P (189 aa).

Lys-34 carries the post-translational modification N6-(3,6-diaminohexanoyl)-5-hydroxylysine.

It belongs to the elongation factor P family. In terms of processing, may be beta-lysylated on the epsilon-amino group of Lys-34 by the combined action of EpmA and EpmB, and then hydroxylated on the C5 position of the same residue by EpmC (if this protein is present). Lysylation is critical for the stimulatory effect of EF-P on peptide-bond formation. The lysylation moiety may extend toward the peptidyltransferase center and stabilize the terminal 3-CCA end of the tRNA. Hydroxylation of the C5 position on Lys-34 may allow additional potential stabilizing hydrogen-bond interactions with the P-tRNA.

Its subcellular location is the cytoplasm. Its pathway is protein biosynthesis; polypeptide chain elongation. Functionally, involved in peptide bond synthesis. Alleviates ribosome stalling that occurs when 3 or more consecutive Pro residues or the sequence PPG is present in a protein, possibly by augmenting the peptidyl transferase activity of the ribosome. Modification of Lys-34 is required for alleviation. In Legionella pneumophila (strain Lens), this protein is Elongation factor P.